The sequence spans 148 residues: U2 snRNP component IST3 (148 aa).

One can recognise an RRM domain in the interval 31-109 (AYIYIGNLNR…RALKIDHTFY (79 aa)).

This sequence belongs to the IST3 family. As to quaternary structure, component of the 45S U1.U2.U4/U6.U5 penta-snRNP particle, a subcomplex of the spliceosome. Belongs to the CWC complex (or CEF1-associated complex), a spliceosome sub-complex reminiscent of a late-stage spliceosome composed of the U2, U5 and U6 snRNAs and at least BUD13, BUD31, BRR2, CDC40, CEF1, CLF1, CUS1, CWC2, CWC15, CWC21, CWC22, CWC23, CWC24, CWC25, CWC27, ECM2, HSH155, IST3, ISY1, LEA1, MSL1, NTC20, PRP8, PRP9, PRP11, PRP19, PRP21, PRP22, PRP45, PRP46, SLU7, SMB1, SMD1, SMD2, SMD3, SMX2, SMX3, SNT309, SNU114, SPP2, SYF1, SYF2, RSE1 and YJU2. Belongs to the pre-mRNA retention and splicing (RES) complex composed of at least BUD13, IST3 and PML1. Subunit of the U2 snRNP. Interacts with RDS3.

The protein localises to the cytoplasm. It is found in the nucleus. Its function is as follows. Required for pre-mRNA splicing and spliceosome assembly. As part of the pre-mRNA retention and splicing (RES) complex, required for nuclear pre-mRNA retention and efficient splicing. Required for MER1-activated splicing. This Saccharomyces cerevisiae (strain ATCC 204508 / S288c) (Baker's yeast) protein is U2 snRNP component IST3 (IST3).